An 81-amino-acid chain; its full sequence is LYR motif-containing protein At3g19508 (81 aa).

The protein belongs to the complex I LYR family. LYRM9 subfamily.

This chain is LYR motif-containing protein At3g19508, found in Arabidopsis thaliana (Mouse-ear cress).